The sequence spans 207 residues: Neuroendocrine protein 7B2 (207 aa).

The signal sequence occupies residues 1–22 (MVSTMLSGLVLWLTFGWTPALA). Cysteines 116 and 125 form a disulfide. 2 positions are modified to phosphoserine: serine 136 and serine 200. Residues 168-207 (KGGQRRKRRSVNPYLQGQRLDNVVAKKSVPHFSDEDKDPE) are disordered.

It belongs to the 7B2 family. In terms of assembly, interacts with PCSK2/PC2 early in the secretory pathway. Dissociation occurs at later stages. Post-translationally, proteolytically cleaved in the Golgi by a furin-like convertase to generate bioactive peptides. In terms of processing, sulfated on tyrosine residues.

It is found in the secreted. Its function is as follows. Acts as a molecular chaperone for PCSK2/PC2, preventing its premature activation in the regulated secretory pathway. Binds to inactive PCSK2 in the endoplasmic reticulum and facilitates its transport from there to later compartments of the secretory pathway where it is proteolytically matured and activated. Also required for cleavage of PCSK2 but does not appear to be involved in its folding. Plays a role in regulating pituitary hormone secretion. The C-terminal peptide inhibits PCSK2 in vitro. This Sus scrofa (Pig) protein is Neuroendocrine protein 7B2 (SCG5).